Consider the following 116-residue polypeptide: MQNKLLDIVENDQLRNDLPEFKSGDNIKVLVRIKEGAKERIQAFEGLVIAIKNYSTHKTFTVRKISNSVGVERTFPLNSPVIVSIEVLRKNKVRRSKLYYMRDLKGKSARLKELKK.

It belongs to the bacterial ribosomal protein bL19 family.

Its function is as follows. This protein is located at the 30S-50S ribosomal subunit interface and may play a role in the structure and function of the aminoacyl-tRNA binding site. The polypeptide is Large ribosomal subunit protein bL19 (Mycoplasma mobile (strain ATCC 43663 / 163K / NCTC 11711) (Mesomycoplasma mobile)).